The primary structure comprises 164 residues: Large ribosomal subunit protein bL21 (164 aa).

The interval Lys-105–Glu-164 is disordered. Positions Ala-133 to Glu-164 are enriched in basic residues.

Belongs to the bacterial ribosomal protein bL21 family. As to quaternary structure, part of the 50S ribosomal subunit. Contacts protein L20.

In terms of biological role, this protein binds to 23S rRNA in the presence of protein L20. In Afipia carboxidovorans (strain ATCC 49405 / DSM 1227 / KCTC 32145 / OM5) (Oligotropha carboxidovorans), this protein is Large ribosomal subunit protein bL21.